The sequence spans 64 residues: uncharacterized protein (64 aa).

This is an uncharacterized protein from Archaeoglobus fulgidus (strain ATCC 49558 / DSM 4304 / JCM 9628 / NBRC 100126 / VC-16).